The chain runs to 493 residues: UDP-N-acetylmuramoyl-L-alanyl-D-glutamate--2,6-diaminopimelate ligase (493 aa).

Residues Leu-30 and Ser-32 each coordinate UDP-N-acetyl-alpha-D-muramoyl-L-alanyl-D-glutamate. Position 117–123 (117–123 (GTNGKTT)) interacts with ATP. Residues Asn-158, 159 to 160 (TT), Ser-186, Gln-192, and Arg-194 contribute to the UDP-N-acetyl-alpha-D-muramoyl-L-alanyl-D-glutamate site. N6-carboxylysine is present on Lys-226. Residues Arg-388, 412 to 415 (DNPR), Gly-463, and Glu-467 contribute to the meso-2,6-diaminopimelate site. The Meso-diaminopimelate recognition motif signature appears at 412–415 (DNPR).

It belongs to the MurCDEF family. MurE subfamily. It depends on Mg(2+) as a cofactor. Post-translationally, carboxylation is probably crucial for Mg(2+) binding and, consequently, for the gamma-phosphate positioning of ATP.

The protein resides in the cytoplasm. The enzyme catalyses UDP-N-acetyl-alpha-D-muramoyl-L-alanyl-D-glutamate + meso-2,6-diaminopimelate + ATP = UDP-N-acetyl-alpha-D-muramoyl-L-alanyl-gamma-D-glutamyl-meso-2,6-diaminopimelate + ADP + phosphate + H(+). Its pathway is cell wall biogenesis; peptidoglycan biosynthesis. Its function is as follows. Catalyzes the addition of meso-diaminopimelic acid to the nucleotide precursor UDP-N-acetylmuramoyl-L-alanyl-D-glutamate (UMAG) in the biosynthesis of bacterial cell-wall peptidoglycan. The sequence is that of UDP-N-acetylmuramoyl-L-alanyl-D-glutamate--2,6-diaminopimelate ligase from Vibrio parahaemolyticus serotype O3:K6 (strain RIMD 2210633).